Reading from the N-terminus, the 886-residue chain is Adhesion G protein-coupled receptor E1 (886 aa).

Residues 1–20 form the signal peptide; sequence MRGFNLLLFWGCCVMHSWEG. Over 21–599 the chain is Extracellular; that stretch reads HIRPTRKPNT…IMASGELTMD (579 aa). The region spanning 31 to 79 is the EGF-like 1 domain; sequence KGNNCRDSTLCPAYATCTNTVDSYYCACKQGFLSSNGQNHFKDPGVRCK. Cystine bridges form between cysteine 35/cysteine 47, cysteine 41/cysteine 56, cysteine 58/cysteine 78, cysteine 84/cysteine 97, cysteine 91/cysteine 106, cysteine 108/cysteine 130, cysteine 136/cysteine 148, cysteine 142/cysteine 157, cysteine 159/cysteine 170, cysteine 176/cysteine 188, cysteine 182/cysteine 197, cysteine 199/cysteine 219, cysteine 225/cysteine 235, cysteine 229/cysteine 244, cysteine 246/cysteine 266, cysteine 272/cysteine 285, cysteine 279/cysteine 294, and cysteine 296/cysteine 315. In terms of domain architecture, EGF-like 2; calcium-binding spans 80–131; it reads DIDECSQSPQPCGPNSSCKNLSGRYKCSCLDGFSSPTGNDWVPGKPGNFSCT. N-linked (GlcNAc...) asparagine glycans are attached at residues asparagine 94, asparagine 99, and asparagine 127. An EGF-like 3; calcium-binding domain is found at 132–171; sequence DINECLTSSVCPEHSDCVNSMGSYSCSCQVGFISRNSTCE. An N-linked (GlcNAc...) asparagine glycan is attached at asparagine 167. An EGF-like 4; calcium-binding domain is found at 172 to 220; that stretch reads DVDECADPRACPEHATCNNTVGNYSCFCNPGFESSSGHLSFQGLKASCE. N-linked (GlcNAc...) asparagine glycans are attached at residues asparagine 189 and asparagine 194. The EGF-like 5; calcium-binding domain maps to 221–267; it reads DIDECTEMCPINSTCTNTPGSYFCTCHPGFAPSNGQLNFTDQGVECR. 2 N-linked (GlcNAc...) asparagine glycosylation sites follow: asparagine 232 and asparagine 258. Residues 268–316 enclose the EGF-like 6; calcium-binding domain; sequence DIDECRQDPSTCGPNSICTNALGSYSCGCIAGFHPNPEGSQKDGNFSCQ. N-linked (GlcNAc...) asparagine glycans are attached at residues asparagine 312, asparagine 366, asparagine 375, and asparagine 448. The GAIN-B domain maps to 431 to 597; sequence EYLDIESKVI…AVIMASGELT (167 aa). Cystine bridges form between cysteine 550–cysteine 579 and cysteine 567–cysteine 581. Residues 550-597 are GPS; that stretch reads CVSWSTDVKGGRWTSFGCVILEASETYTICSCNQMANLAVIMASGELT. Residues 600–627 form a helical membrane-spanning segment; that stretch reads FSLYIISHVGIIISLVCLVLAIATFLLC. Residues 628–634 lie on the Cytoplasmic side of the membrane; that stretch reads RSIRNHN. The helical transmembrane segment at 635–656 threads the bilayer; sequence TYLHLHLCVCLLLAKTLFLAGI. The Extracellular portion of the chain corresponds to 657–666; sequence HKTDNKMGCA. The helical transmembrane segment at 667-690 threads the bilayer; that stretch reads IIAGFLHYLFLACFFWMLVEAVIL. Residues 691–709 are Cytoplasmic-facing; that stretch reads FLMVRNLKVVNYFSSRNIK. Residues 710–731 form a helical membrane-spanning segment; sequence MLHICAFGYGLPMLVVVISASV. Topologically, residues 732-747 are extracellular; sequence QPQGYGMHNRCWLNTE. Residues 748 to 776 form a helical membrane-spanning segment; it reads TGFIWSFLGPVCTVIVINSLLLTWTLWIL. Residues 777–794 are Cytoplasmic-facing; sequence RQRLSSVNAEVSTLKDTR. A helical membrane pass occupies residues 795–814; it reads LLTFKAFAQLFILGCSWVLG. Residues 815–829 lie on the Extracellular side of the membrane; it reads IFQIGPVAGVMAYLF. A helical transmembrane segment spans residues 830–852; the sequence is TIINSLQGAFIFLIHCLLNGQVR. Topologically, residues 853 to 886 are cytoplasmic; that stretch reads EEYKRWITGKTKPSSQSQTSRILLSSMPSASKTG. Positions 862 to 886 are disordered; it reads KTKPSSQSQTSRILLSSMPSASKTG. A compositionally biased stretch (polar residues) spans 863-886; the sequence is TKPSSQSQTSRILLSSMPSASKTG.

This sequence belongs to the G-protein coupled receptor 2 family. Adhesion G-protein coupled receptor (ADGR) subfamily. In terms of tissue distribution, expression is restricted to eosinophils.

The protein localises to the cell membrane. Orphan receptor involved in cell adhesion and probably in cell-cell interactions specifically involving cells of the immune system. May play a role in regulatory T-cells (Treg) development. This chain is Adhesion G protein-coupled receptor E1, found in Homo sapiens (Human).